A 292-amino-acid polypeptide reads, in one-letter code: High-affinity heme uptake system protein IsdE (292 aa).

The signal sequence occupies residues 1–19 (MRIIKYLTILVISVVILTS). A lipid anchor (N-palmitoyl cysteine) is attached at C20. C20 carries the S-diacylglycerol cysteine lipid modification. The 257-residue stretch at 35-291 (RIVPTTVALT…QLYDLFYKDK (257 aa)) folds into the Fe/B12 periplasmic-binding domain. Residues V41, A42, S60, Y61, M78, and H229 each contribute to the heme site.

This sequence belongs to the bacterial solute-binding protein 8 family. Requires heme b as cofactor.

Its subcellular location is the cell membrane. Its function is as follows. Involved in heme (porphyrin) scavenging. Binds Fe(2+) and Fe(3+) heme but the largest fraction is Fe(2+) heme. Functions as a high-affinity heme binding protein and probably has a role in relaying heme-iron from cell wall-anchored isd proteins receptors to the probable permease IsdF. This Staphylococcus aureus (strain bovine RF122 / ET3-1) protein is High-affinity heme uptake system protein IsdE (isdE).